Reading from the N-terminus, the 319-residue chain is Lipoyl synthase (319 aa).

The disordered stretch occupies residues Met-1 to Pro-29. Basic and acidic residues predominate over residues Val-8–Pro-29. Positions 61, 66, 72, 87, 91, 94, and 300 each coordinate [4Fe-4S] cluster. The region spanning Trp-73–Leu-289 is the Radical SAM core domain.

This sequence belongs to the radical SAM superfamily. Lipoyl synthase family. [4Fe-4S] cluster is required as a cofactor.

The protein localises to the cytoplasm. It catalyses the reaction [[Fe-S] cluster scaffold protein carrying a second [4Fe-4S](2+) cluster] + N(6)-octanoyl-L-lysyl-[protein] + 2 oxidized [2Fe-2S]-[ferredoxin] + 2 S-adenosyl-L-methionine + 4 H(+) = [[Fe-S] cluster scaffold protein] + N(6)-[(R)-dihydrolipoyl]-L-lysyl-[protein] + 4 Fe(3+) + 2 hydrogen sulfide + 2 5'-deoxyadenosine + 2 L-methionine + 2 reduced [2Fe-2S]-[ferredoxin]. The protein operates within protein modification; protein lipoylation via endogenous pathway; protein N(6)-(lipoyl)lysine from octanoyl-[acyl-carrier-protein]: step 2/2. Catalyzes the radical-mediated insertion of two sulfur atoms into the C-6 and C-8 positions of the octanoyl moiety bound to the lipoyl domains of lipoate-dependent enzymes, thereby converting the octanoylated domains into lipoylated derivatives. This Rhodopseudomonas palustris (strain BisA53) protein is Lipoyl synthase.